Consider the following 348-residue polypeptide: Dihydroorotase (348 aa).

Histidine 13 and histidine 15 together coordinate Zn(2+). Residues 15–17 (HLR) and asparagine 41 contribute to the substrate site. Zn(2+) contacts are provided by lysine 99, histidine 136, and histidine 174. The residue at position 99 (lysine 99) is an N6-carboxylysine. Histidine 136 is a binding site for substrate. Residue leucine 219 coordinates substrate. Aspartate 247 is a Zn(2+) binding site. Aspartate 247 is a catalytic residue. Positions 251 and 263 each coordinate substrate.

It belongs to the metallo-dependent hydrolases superfamily. DHOase family. Class II DHOase subfamily. In terms of assembly, homodimer. It depends on Zn(2+) as a cofactor.

The enzyme catalyses (S)-dihydroorotate + H2O = N-carbamoyl-L-aspartate + H(+). Its pathway is pyrimidine metabolism; UMP biosynthesis via de novo pathway; (S)-dihydroorotate from bicarbonate: step 3/3. Its function is as follows. Catalyzes the reversible cyclization of carbamoyl aspartate to dihydroorotate. The protein is Dihydroorotase of Coxiella burnetii (strain RSA 331 / Henzerling II).